We begin with the raw amino-acid sequence, 250 residues long: MTMTSLSESLEASDPSKSAFLEFSHGYQSHQQHSPGVSHAHYPVHGLHQGAHSQYDAAFSPGAASYSRPLAYHYSTAHHHPGAYLPYQHNSAVGYSRVEDADSEKQSSIESGEIRLNGKGKKIRKPRTIYSSLQLQALNQRFQQTQYLALPERADLAAKLGLTQTQVKIWFQNKRSKYKKIMKHGSSGPEGEHLQAASASGAPCSPGMPPLWDVSMPSKGAPIHSGGYMNSFGHWYSGHHQDPMARTQMM.

A DNA-binding region (homeobox) is located at residues 123-182; it reads IRKPRTIYSSLQLQALNQRFQQTQYLALPERADLAAKLGLTQTQVKIWFQNKRSKYKKIM. The segment at 182 to 202 is disordered; sequence MKHGSSGPEGEHLQAASASGA.

The protein belongs to the distal-less homeobox family.

The protein resides in the nucleus. This Danio rerio (Zebrafish) protein is Homeobox protein Dlx4a (dlx4a).